The sequence spans 394 residues: G2/mitotic-specific cyclin-B (394 aa).

Residues 360–394 (QSHPSPNSRLDQEEDMASSKFMSDQQATQELKSIR) form a disordered region. Positions 379 to 394 (KFMSDQQATQELKSIR) are enriched in polar residues.

The protein belongs to the cyclin family. Cyclin AB subfamily. Interacts with the CDK1 protein kinase to form a serine/threonine kinase holoenzyme complex also known as maturation promoting factor (MPF). The cyclin subunit imparts substrate specificity to the complex.

In terms of biological role, essential for the control of the cell cycle at the G2/M (mitosis) transition. In Patiria pectinifera (Starfish), this protein is G2/mitotic-specific cyclin-B.